We begin with the raw amino-acid sequence, 354 residues long: Thymidylate synthase (354 aa).

Positions 1 to 32 are disordered; the sequence is MPAAGSEPSRPPSPPGVQEQSAEPRPPPPPHG. Position 53 (arginine 53) interacts with dUMP. Residue serine 117 is modified to Phosphoserine. A dUMP-binding site is contributed by 178–179; it reads RR. Cysteine 198 acts as the Nucleophile in catalysis. DUMP-binding positions include 218–221, asparagine 229, and 259–261; these read RSGD and HIY. Aspartate 221 contacts (6R)-5,10-methylene-5,6,7,8-tetrahydrofolate. Residue lysine 349 forms a Glycyl lysine isopeptide (Lys-Gly) (interchain with G-Cter in SUMO2) linkage. (6R)-5,10-methylene-5,6,7,8-tetrahydrofolate is bound at residue alanine 353.

This sequence belongs to the thymidylate synthase family. Homodimer.

Its subcellular location is the nucleus. It localises to the cytoplasm. The protein localises to the mitochondrion. The protein resides in the mitochondrion matrix. It is found in the mitochondrion inner membrane. It catalyses the reaction dUMP + (6R)-5,10-methylene-5,6,7,8-tetrahydrofolate = 7,8-dihydrofolate + dTMP. It functions in the pathway pyrimidine metabolism; dTTP biosynthesis. Catalyzes the reductive methylation of 2'-deoxyuridine 5'-monophosphate (dUMP) to thymidine 5'-monophosphate (dTMP), using the cosubstrate, 5,10- methylenetetrahydrofolate (CH2H4folate) as a 1-carbon donor and reductant and contributes to the de novo mitochondrial thymidylate biosynthesis pathway. This Bos taurus (Bovine) protein is Thymidylate synthase (TYMS).